Here is a 233-residue protein sequence, read N- to C-terminus: H-2 class II histocompatibility antigen, A-F alpha chain (233 aa).

The segment at 1–88 (EDDIEADHVG…KRSNFTPATN (88 aa)) is alpha-1. Topologically, residues 1–195 (EDDIEADHVG…IPAPMSELTE (195 aa)) are extracellular. Residues 89–182 (EAPQATVFPK…GLEEPVLKHW (94 aa)) form an alpha-2 region. An Ig-like C1-type domain is found at 91–183 (PQATVFPKSP…LEEPVLKHWE (93 aa)). Cysteine 111 and cysteine 167 are joined by a disulfide. Asparagine 122 is a glycosylation site (N-linked (GlcNAc...) asparagine). The interval 183–195 (EPEIPAPMSELTE) is connecting peptide. The helical transmembrane segment at 196 to 221 (TVVCALGLSVGLVGIVVGTIFIIQGL) threads the bilayer. The Cytoplasmic portion of the chain corresponds to 222–233 (RSGGTSRHPGPL).

It belongs to the MHC class II family.

The protein resides in the membrane. This is H-2 class II histocompatibility antigen, A-F alpha chain (H2-Aa) from Mus musculus (Mouse).